We begin with the raw amino-acid sequence, 620 residues long: Putative ribonuclease H protein At1g65750 (620 aa).

The RNase H type-1 domain maps to 456–586 (CVGWVKVNTD…ADGLANYAFS (131 aa)). Mg(2+) is bound by residues D465, E505, D529, and D578.

Mg(2+) serves as cofactor.

The enzyme catalyses Endonucleolytic cleavage to 5'-phosphomonoester.. The polypeptide is Putative ribonuclease H protein At1g65750 (Arabidopsis thaliana (Mouse-ear cress)).